Reading from the N-terminus, the 217-residue chain is Frizzled-8 (217 aa).

Over 1 to 26 the chain is Extracellular; the sequence is AGAAELQPELAVAEHVRYESTGPALC. The helical transmembrane segment at 27–47 threads the bilayer; the sequence is TVVFLLVYFFGMASSIWWVIL. At 48-69 the chain is on the cytoplasmic side; that stretch reads SLTWFLAAGMKWGNEAIAGYAQ. The chain crosses the membrane as a helical span at residues 70 to 90; sequence YFHLAAWLLPSVKSIAVLALS. The Extracellular segment spans residues 91–113; it reads SVDGDPVAGICYVGNQSLENLRG. N105 carries an N-linked (GlcNAc...) asparagine glycan. The helical transmembrane segment at 114-134 threads the bilayer; that stretch reads FVLAPLVVYLFTGSLFLLAGF. Topologically, residues 135–160 are cytoplasmic; sequence VSLFRIRSVIKQGGTKTDKLEKLMIR. A helical transmembrane segment spans residues 161 to 181; the sequence is IGIFTVLYTVPATIVIACYIY. Over 182–209 the chain is Extracellular; sequence EQHNREAWEQAQNCSCPGDPHRPKPDYA. Residue N194 is glycosylated (N-linked (GlcNAc...) asparagine). Residues 210–217 traverse the membrane as a helical segment; it reads VFMLKYFM.

It belongs to the G-protein coupled receptor Fz/Smo family.

The protein resides in the membrane. Its subcellular location is the cell membrane. Receptor for Wnt proteins. Most of frizzled receptors are coupled to the beta-catenin canonical signaling pathway, which leads to the activation of disheveled proteins, inhibition of GSK-3 kinase, nuclear accumulation of beta-catenin and activation of Wnt target genes. A second signaling pathway involving PKC and calcium fluxes has been seen for some family members, but it is not yet clear if it represents a distinct pathway or if it can be integrated in the canonical pathway, as PKC seems to be required for Wnt-mediated inactivation of GSK-3 kinase. Both pathways seem to involve interactions with G-proteins. May be involved in transduction and intercellular transmission of polarity information during tissue morphogenesis and/or in differentiated tissues. This is Frizzled-8 (FZD8) from Gallus gallus (Chicken).